Reading from the N-terminus, the 519-residue chain is DNA-directed RNA polymerase subunit Rpo2N (519 aa).

Belongs to the RNA polymerase beta chain family. Part of the RNA polymerase complex.

Its subcellular location is the cytoplasm. It catalyses the reaction RNA(n) + a ribonucleoside 5'-triphosphate = RNA(n+1) + diphosphate. Its function is as follows. DNA-dependent RNA polymerase (RNAP) catalyzes the transcription of DNA into RNA using the four ribonucleoside triphosphates as substrates. The Rpo2 subunit (Rpo2N and Rpo2C in this organism) is implicated in DNA promoter recognition and in nucleotide binding. The chain is DNA-directed RNA polymerase subunit Rpo2N from Methanothermobacter thermautotrophicus (strain ATCC 29096 / DSM 1053 / JCM 10044 / NBRC 100330 / Delta H) (Methanobacterium thermoautotrophicum).